Here is a 76-residue protein sequence, read N- to C-terminus: RNA-binding protein KhpA (76 aa).

Residues 29-76 (SLTYKLSVSKEDMGRVIGKQGRIAKAIRTLVYAVGSKNDKKIRLEIIE) form the KH domain.

The protein belongs to the KhpA RNA-binding protein family. As to quaternary structure, forms a complex with KhpB.

It is found in the cytoplasm. Its function is as follows. A probable RNA chaperone. Forms a complex with KhpB which binds to cellular RNA and controls its expression. Plays a role in peptidoglycan (PG) homeostasis and cell length regulation. In Listeria innocua serovar 6a (strain ATCC BAA-680 / CLIP 11262), this protein is RNA-binding protein KhpA.